The following is a 125-amino-acid chain: Small ribosomal subunit protein eS25 (125 aa).

The span at 1–23 (MPPKDDKKKKDAGKSAKKDKDPV) shows a compositional bias: basic and acidic residues. Residues 1–38 (MPPKDDKKKKDAGKSAKKDKDPVNKSGGKAKKKKWSKG) form a disordered region. Positions 28–38 (GKAKKKKWSKG) are enriched in basic residues. Lys43 is subject to N6-acetyllysine. Lys52 carries the post-translational modification N6-acetyllysine; alternate. Residue Lys52 is modified to N6-succinyllysine; alternate. N6-acetyllysine is present on residues Lys60 and Lys66. Lys94 is modified (N6-acetyllysine; alternate). N6-succinyllysine; alternate is present on Lys94.

The protein belongs to the eukaryotic ribosomal protein eS25 family. Component of the small ribosomal subunit.

It localises to the cytoplasm. Its function is as follows. Component of the small ribosomal subunit. The ribosome is a large ribonucleoprotein complex responsible for the synthesis of proteins in the cell. The sequence is that of Small ribosomal subunit protein eS25 (RPS25) from Homo sapiens (Human).